The sequence spans 225 residues: UPF0758 protein Ping_0056 (225 aa).

The MPN domain maps to 103–225; that stretch reads ALTSAAQTKA…CTSFAENGWI (123 aa). Residues His-174, His-176, and Asp-187 each coordinate Zn(2+). The short motif at 174-187 is the JAMM motif element; the sequence is HNHPSGDPSASEAD.

It belongs to the UPF0758 family.

The sequence is that of UPF0758 protein Ping_0056 from Psychromonas ingrahamii (strain DSM 17664 / CCUG 51855 / 37).